A 641-amino-acid chain; its full sequence is MTTFSKTPLLDTIKTPEDLRRLKVEQVRQVADELRQETIDAVSVTGGHFGAGLGVVELTTAIHYVFDTPRDRLIWDVGHQAYPHKILTGRRDRIRTLRTGGGLSGFTKRAESDYDPFGAAHSSTSISAGLGMAVARDLSGGKNNVIAVIGDGAMSAGMAYEAMNNAGAMNSRLIVILNDNDMSIAPPVGAMSAYLSRLYSGKTYRTLRDAAKQLGQHLPKVIANRASRVEEYSRGFMMDGGTLFEELGFYYVGPIDGHNLDHLLPVLKNVRDMETGPILVHVVTQKGKGYSPAEAAADKYHAVAKFDIATGTQAKAKPNAPAYQNVFGQSLVKEAEKDEKIVGITAAMPSGTGIDIFAKAFPKRTFDVGIAEQHAVTFAAGLAAEGYKPFCAIYSTFLQRGYDQIVHDVCIQSLPVRFAIDRAGLVGADGATHAGSFDNAYLGCLPNMVIMAASDEAELVHMVATQVAIDDRPSSVRYPRGEGRGVEMPEVGVALPIGKGRMIRQGKQVALLSFGTRLAECEKAADELAAHGLSASIADARFMKPLDEELVLKLARDHEILITIEEGSIGGFGSHVMQYLADQGMLDGGLKMRSMVLPDEFQDHDTPAAMYARAGLDAKGIVRKVFEVLGKDYAAEAVKLA.

Thiamine diphosphate is bound by residues H79 and 120 to 122 (AHS). D151 provides a ligand contact to Mg(2+). Residues 152–153 (GA), N180, Y290, and E372 contribute to the thiamine diphosphate site. N180 contributes to the Mg(2+) binding site.

The protein belongs to the transketolase family. DXPS subfamily. Homodimer. The cofactor is Mg(2+). Thiamine diphosphate is required as a cofactor.

It carries out the reaction D-glyceraldehyde 3-phosphate + pyruvate + H(+) = 1-deoxy-D-xylulose 5-phosphate + CO2. The protein operates within metabolic intermediate biosynthesis; 1-deoxy-D-xylulose 5-phosphate biosynthesis; 1-deoxy-D-xylulose 5-phosphate from D-glyceraldehyde 3-phosphate and pyruvate: step 1/1. Functionally, catalyzes the acyloin condensation reaction between C atoms 2 and 3 of pyruvate and glyceraldehyde 3-phosphate to yield 1-deoxy-D-xylulose-5-phosphate (DXP). The sequence is that of 1-deoxy-D-xylulose-5-phosphate synthase from Bradyrhizobium sp. (strain ORS 278).